Reading from the N-terminus, the 722-residue chain is BTB/POZ domain-containing protein 9 (722 aa).

Residues 46 to 112 (ADVEFIVEEE…IYSGTLLLST (67 aa)) form the BTB domain. In terms of domain architecture, BACK spans 151-247 (CMILDAARLY…MNLEHLLQVV (97 aa)). Positions 565 to 593 (QDKNYLKKIADMEKEREKREKEKKTAKTD) form a coiled coil. The segment covering 577–594 (EKEREKREKEKKTAKTDD) has biased composition (basic and acidic residues). 2 disordered regions span residues 577-626 (EKER…VLRS) and 640-722 (PLTP…RETL). Over residues 597–606 (IASTSGSSLA) the composition is skewed to polar residues. Residues 607 to 626 (SGHAESPSTSSSSSQSVLRS) are compositionally biased toward low complexity. Pro residues predominate over residues 641–658 (LTPPALSPPGTPALPAPL). The segment covering 670-679 (EQNQPSNISA) has biased composition (polar residues). Low complexity predominate over residues 686–704 (SPSSRSNPSPSLSRSRSQS).

Detected in the brain (at protein level).

The protein resides in the cytoplasm. Essential for the homeostatic regulation of sleep and motor activity, by depressing hyperactivity and wakefulness. May function, at least in part, by ensuring dopamine biosynthesis. The sequence is that of BTB/POZ domain-containing protein 9 from Drosophila melanogaster (Fruit fly).